Consider the following 272-residue polypeptide: Cholesterol 25-hydroxylase (272 aa).

Asparagine 5 carries N-linked (GlcNAc...) asparagine glycosylation. A run of 3 helical transmembrane segments spans residues 38–58 (FFPV…FVVL), 84–104 (LLPC…PVTL), and 121–141 (LLLL…EFFV). The region spanning 129–263 (LFCLLLFDME…FTHWDKILGT (135 aa)) is the Fatty acid hydroxylase domain. A Histidine box-1 motif is present at residues 142-146 (WHLLH). A Histidine box-2 motif is present at residues 157-161 (HKVHH). Residues asparagine 163 and asparagine 189 are each glycosylated (N-linked (GlcNAc...) asparagine). The Histidine box-3 signature appears at 238–244 (HHDLHHS).

Belongs to the sterol desaturase family. Fe cation is required as a cofactor. Post-translationally, N-glycosylated.

It is found in the endoplasmic reticulum membrane. It carries out the reaction cholesterol + AH2 + O2 = 25-hydroxycholesterol + A + H2O. The enzyme catalyses cholesterol + NADPH + O2 + H(+) = 25-hydroxycholesterol + NADP(+) + H2O. In terms of biological role, catalyzes the formation of 25-hydroxycholesterol from cholesterol, leading to repress cholesterol biosynthetic enzymes. Plays a key role in cell positioning and movement in lymphoid tissues: 25-hydroxycholesterol is an intermediate in biosynthesis of 7-alpha,25-dihydroxycholesterol (7-alpha,25-OHC), an oxysterol that acts as a ligand for the G protein-coupled receptor GPR183/EBI2, a chemotactic receptor for a number of lymphoid cells. May play an important role in regulating lipid metabolism by synthesizing a corepressor that blocks sterol regulatory element binding protein (SREBP) processing. As an interferon-stimulated gene, has broad antiviral activities against a wide range of enveloped viruses, such as vesicular stomatitis virus (VSV) and SARS coronavirus-2 (SARS-CoV-2). Its product, 25-hydroxycholesterol, activates the ER-localized enzyme ACAT to induce internalization of accessible cholesterol on the plasma membrane and restricts SARS-CoV-2 S protein-mediated fusion which inhibits virus replication. In testis, production of 25-hydroxycholesterol by macrophages plays a role in Leydig cell differentiation. Required to restrain inflammation in macrophages: production of 25-hydroxycholesterol protects macrophages from cholesterol overload, thereby preventing mitochondrial DNA release and subsequent activation of the AIM2 inflammasome. The sequence is that of Cholesterol 25-hydroxylase from Homo sapiens (Human).